A 446-amino-acid chain; its full sequence is MPKRTFTKEDIRKFAEEENVRYLRLQFTDILGTIKNVEVPVSQLEKVLDNEMMFDGSSIEGFVRIEESDMYLHPDLDTWVIFPWTAGQGKVARLICDVYKTDGTPFEGDPRANLKRVLKEMEDLGFTDFNLGPEPEFFLFKLDEKGEPTLELNDDGGYFDLAPTDLGENCRRDIVLELEDMGFDIEASHHEVAPGQHEIDFKYADAVTACDNIQTFKLVVKTIARKHNLHATFMPKPLFGVNGSGMHFNVSLFKGKENAFFDPNTEMGLTETAYQFTAGVLKNARGFTAVCNPLVNSYKRLVPGYEAPCYIAWSGKNRSPLIRVPSSRGLSTRIEVRSVDPAANPYMALAAILEAGLDGIKNKLKVPEPVNQNIYEMNREEREAVGIQDLPSTLYTALKAMRENEVIKKALGNHIYNQFINSKSIEWDYYRTQVSEWERDQYMKQY.

Residues 18–103 form the GS beta-grasp domain; sequence ENVRYLRLQF…LICDVYKTDG (86 aa). Positions 110 to 446 constitute a GS catalytic domain; the sequence is PRANLKRVLK…WERDQYMKQY (337 aa). Residues Glu134 and Glu136 each coordinate Mg(2+). Glu186 serves as a coordination point for ATP. Residues Glu191 and Glu198 each coordinate Mg(2+). Residues 242–243 and Gly243 contribute to the L-glutamate site; that span reads NG. Mg(2+) is bound at residue His247. Ser251 is a binding site for ATP. L-glutamate-binding residues include Arg300, Glu306, and Arg318. Residues Arg318 and Arg323 each coordinate ATP. Mg(2+) is bound at residue Glu335. Arg337 provides a ligand contact to L-glutamate.

The protein belongs to the glutamine synthetase family. Oligomer of 12 subunits arranged in the form of two hexagons. In its feedback-inhibited form, interacts with TnrA in order to block its DNA-binding activity. Requires Mg(2+) as cofactor.

It localises to the cytoplasm. The catalysed reaction is L-glutamate + NH4(+) + ATP = L-glutamine + ADP + phosphate + H(+). Its activity is regulated as follows. Inhibited by glutamine. Its function is as follows. Glutamine synthetase (GS) is an unusual multitasking protein that functions as an enzyme, a transcription coregulator, and a chaperone in ammonium assimilation and in the regulation of genes involved in nitrogen metabolism. It catalyzes the ATP-dependent biosynthesis of glutamine from glutamate and ammonia. Feedback-inhibited GlnA also interacts with and regulates the activity of the transcriptional regulator TnrA. During nitrogen limitation, TnrA is in its DNA-binding active state and turns on the transcription of genes required for nitrogen assimilation. Under conditions of nitrogen excess, feedback-inhibited GlnA forms a stable complex with TnrA, which inhibits its DNA-binding activity. In contrast, feedback-inhibited GlnA acts as a chaperone to stabilize the DNA-binding activity of GlnR, which represses the transcription of nitrogen assimilation genes. This chain is Glutamine synthetase, found in Staphylococcus aureus (strain N315).